A 592-amino-acid polypeptide reads, in one-letter code: Transcription factor MYC3 (592 aa).

The tract at residues 82–141 is JAZ-interaction domain; that stretch reads STGDNTVILGWGDGYYKGEEDKEKKKNNTNTAEQEHRKRVIRELNSLISGGIGVSDESND. 4 disordered regions span residues 261 to 313, 341 to 361, 393 to 422, and 465 to 508; these read ENDP…VENQ, CGNE…NDEG, EPPE…AERQ, and QQAE…STAS. Over residues 278–293 the composition is skewed to low complexity; sequence SPARVNNGNNSNSNSK. Over residues 294–306 the composition is skewed to basic and acidic residues; it reads SDSHQISKLEKND. The span at 352 to 361 shows a compositional bias: polar residues; the sequence is VSKGSNNDEG. A compositionally biased stretch (basic residues) spans 398 to 407; it reads KPRKRGRKPA. Composition is skewed to basic and acidic residues over residues 408–422 and 468–482; these read NGRE…AERQ and ESDK…DGMS. One can recognise a bHLH domain in the interval 411–460; that stretch reads EEPLNHVEAERQRREKLNQRFYSLRAVVPNVSKMDKASLLGDAISYINEL.

As to quaternary structure, homo- and heterodimer. Interacts with MYB28, MYB29, MYB34, MYB51, MYB76, MYB122, MYC2, MYC4, AFPH2/NINJA and the JAZ repressors TIFY10A/JAZ1, TIFY10B/JAZ2, TIFY6B/JAZ3, TIFY11A/JAZ5, TIFY11B/JAZ6, TIFY5B/JAZ7, TIFY5A/JAZ8, TIFY7/JAZ9, TIFY9/JAZ10, TIFY3A/JAZ11 and TIFY3B/JAZ12. As to expression, constitutively expressed in roots, stems, leaves, flowers, and seedlings.

The protein localises to the nucleus. Transcription factor involved in tryptophan, jasmonic acid (JA) and other stress-responsive gene regulation. With MYC2 and MYC4, controls additively subsets of JA-dependent responses. Can form complexes with all known glucosinolate-related MYBs to regulate glucosinolate biosynthesis. Binds to the G-box (5'-CACGTG-3') of promoters. Activates multiple TIFY/JAZ promoters. The protein is Transcription factor MYC3 (MYC3) of Arabidopsis thaliana (Mouse-ear cress).